We begin with the raw amino-acid sequence, 273 residues long: HTH-type transcriptional activator RhaS (273 aa).

In terms of domain architecture, HTH araC/xylS-type spans 174–272 (YQLLDWLQNN…SQSPRDLRSQ (99 aa)). 2 DNA-binding regions (H-T-H motif) span residues 191–212 (PELA…KNKT) and 239–262 (VTDI…KREF).

In terms of assembly, binds DNA as a dimer.

The protein resides in the cytoplasm. In terms of biological role, activates expression of the rhaBAD and rhaT operons. This is HTH-type transcriptional activator RhaS from Yersinia pestis bv. Antiqua (strain Angola).